The sequence spans 178 residues: Large ribosomal subunit protein bL25 (178 aa).

It belongs to the bacterial ribosomal protein bL25 family. CTC subfamily. Part of the 50S ribosomal subunit; part of the 5S rRNA/L5/L18/L25 subcomplex. Contacts the 5S rRNA. Binds to the 5S rRNA independently of L5 and L18.

Its function is as follows. This is one of the proteins that binds to the 5S RNA in the ribosome where it forms part of the central protuberance. The protein is Large ribosomal subunit protein bL25 of Helicobacter pylori (strain Shi470).